The chain runs to 1278 residues: Alpha-glucan water dikinase 2 (1278 aa).

A signal peptide spans 1 to 23 (MATSKSQQFQLIEGMELQITVTG). Catalysis depends on His-886, which acts as the Tele-phosphohistidine intermediate.

The protein belongs to the PEP-utilizing enzyme family. Homodimer. Requires Mg(2+) as cofactor.

It catalyses the reaction [(1-&gt;4)-alpha-D-glucosyl](n) + n ATP + n H2O = [(1-&gt;4)-6-phospho-alpha-D-glucosyl](n) + n AMP + n phosphate + 2n H(+). Its function is as follows. Mediates the incorporation of phosphate into alpha-glucan, mostly at the C-6 position of glucose units. This is Alpha-glucan water dikinase 2 (GWD2) from Arabidopsis thaliana (Mouse-ear cress).